The following is a 441-amino-acid chain: Serine--tRNA ligase (441 aa).

Position 250–252 (250–252) interacts with L-serine; the sequence is TSE. Residues 281 to 283 and V297 contribute to the ATP site; that span reads RRE. E304 is an L-serine binding site. An ATP-binding site is contributed by 368–371; it reads EIVS. T402 lines the L-serine pocket.

This sequence belongs to the class-II aminoacyl-tRNA synthetase family. Type-1 seryl-tRNA synthetase subfamily. Homodimer. The tRNA molecule binds across the dimer.

Its subcellular location is the cytoplasm. It carries out the reaction tRNA(Ser) + L-serine + ATP = L-seryl-tRNA(Ser) + AMP + diphosphate + H(+). The catalysed reaction is tRNA(Sec) + L-serine + ATP = L-seryl-tRNA(Sec) + AMP + diphosphate + H(+). The protein operates within aminoacyl-tRNA biosynthesis; selenocysteinyl-tRNA(Sec) biosynthesis; L-seryl-tRNA(Sec) from L-serine and tRNA(Sec): step 1/1. Its function is as follows. Catalyzes the attachment of serine to tRNA(Ser). Is also able to aminoacylate tRNA(Sec) with serine, to form the misacylated tRNA L-seryl-tRNA(Sec), which will be further converted into selenocysteinyl-tRNA(Sec). The sequence is that of Serine--tRNA ligase from Thermoplasma acidophilum (strain ATCC 25905 / DSM 1728 / JCM 9062 / NBRC 15155 / AMRC-C165).